Reading from the N-terminus, the 109-residue chain is RNA-binding protein Hfq (109 aa).

A Sm domain is found at 9–68 (DPFLNALRKEKVSVSVYLVNGIKLQGQVEAFDQFCIVLRNTVNQMVYKHAISTIVPAKSV). Positions 77–109 (PYHQNSNDEQDENVDDIHSDDLEIQENEGNIHE) are disordered.

The protein belongs to the Hfq family. As to quaternary structure, homohexamer.

Functionally, RNA chaperone that binds small regulatory RNA (sRNAs) and mRNAs to facilitate mRNA translational regulation in response to envelope stress, environmental stress and changes in metabolite concentrations. Also binds with high specificity to tRNAs. The polypeptide is RNA-binding protein Hfq (Francisella tularensis subsp. tularensis (strain FSC 198)).